The chain runs to 95 residues: MWKARTALGDLDTVFYDAGTANGTNGISVSPVNGFLNWWDSIELWLSGLAFVLQAALVMPVVLAFAYGTALVLDFALGKGIQLMRRAYHPDSARG.

The chain crosses the membrane as a helical span at residues 45–65; the sequence is WLSGLAFVLQAALVMPVVLAF.

It is found in the membrane. This is an uncharacterized protein from Mycobacterium leprae (strain TN).